The sequence spans 802 residues: Leucine--tRNA ligase (802 aa).

The short motif at Pro40–His51 is the 'HIGH' region element. Positions Lys576–Ser580 match the 'KMSKS' region motif. Lys579 contacts ATP.

The protein belongs to the class-I aminoacyl-tRNA synthetase family.

Its subcellular location is the cytoplasm. It catalyses the reaction tRNA(Leu) + L-leucine + ATP = L-leucyl-tRNA(Leu) + AMP + diphosphate. The protein is Leucine--tRNA ligase of Bacillus cereus (strain G9842).